A 137-amino-acid polypeptide reads, in one-letter code: Ribosomal RNA large subunit methyltransferase H (137 aa).

Residues leucine 56, glycine 85, and 104–109 (LSPLTL) each bind S-adenosyl-L-methionine.

The protein belongs to the RNA methyltransferase RlmH family. In terms of assembly, homodimer.

The protein localises to the cytoplasm. The catalysed reaction is pseudouridine(1915) in 23S rRNA + S-adenosyl-L-methionine = N(3)-methylpseudouridine(1915) in 23S rRNA + S-adenosyl-L-homocysteine + H(+). In terms of biological role, specifically methylates the pseudouridine at position 1915 (m3Psi1915) in 23S rRNA. The protein is Ribosomal RNA large subunit methyltransferase H of Thermus thermophilus (strain ATCC BAA-163 / DSM 7039 / HB27).